A 100-amino-acid polypeptide reads, in one-letter code: Large ribosomal subunit protein eL21 (100 aa).

Belongs to the eukaryotic ribosomal protein eL21 family.

The chain is Large ribosomal subunit protein eL21 from Pyrobaculum aerophilum (strain ATCC 51768 / DSM 7523 / JCM 9630 / CIP 104966 / NBRC 100827 / IM2).